The following is a 345-amino-acid chain: Src kinase-associated phosphoprotein 1 (345 aa).

In terms of domain architecture, PH spans 109–212 (KIFKQGYLER…WVEQIQFLVK (104 aa)). Residues 226–274 (ETYDDIESTESSPVVGLTNDSENSLQEDDVYESIPGDEETEESEDENYE) form a disordered region. A compositionally biased stretch (acidic residues) spans 250-272 (LQEDDVYESIPGDEETEESEDEN). An SH3 domain is found at 283 to 344 (FYGDYYQGLW…PKDYLTLAFD (62 aa)).

This sequence belongs to the SKAP family. As to quaternary structure, homodimer. Post-translationally, phosphorylated on tyrosines.

It localises to the cytoplasm. The protein resides in the nucleus. It is found in the cell membrane. In terms of biological role, positively regulates T-cell receptor signaling. Required for optimal conjugation between T-cells and antigen-presenting cells. The protein is Src kinase-associated phosphoprotein 1 (skap1) of Xenopus tropicalis (Western clawed frog).